The primary structure comprises 286 residues: NAD kinase (286 aa).

The Proton acceptor role is filled by Asp-67. NAD(+) is bound by residues 67–68 (DG), Arg-72, 141–142 (ND), Arg-152, Asp-171, 182–187 (TAYSLS), and Gln-242.

Belongs to the NAD kinase family. A divalent metal cation is required as a cofactor.

The protein resides in the cytoplasm. It carries out the reaction NAD(+) + ATP = ADP + NADP(+) + H(+). In terms of biological role, involved in the regulation of the intracellular balance of NAD and NADP, and is a key enzyme in the biosynthesis of NADP. Catalyzes specifically the phosphorylation on 2'-hydroxyl of the adenosine moiety of NAD to yield NADP. The chain is NAD kinase from Ruminiclostridium cellulolyticum (strain ATCC 35319 / DSM 5812 / JCM 6584 / H10) (Clostridium cellulolyticum).